The sequence spans 426 residues: Pyrophosphate--fructose 6-phosphate 1-phosphotransferase 2 (426 aa).

A diphosphate-binding site is contributed by Gly-15. Residue Asp-114 participates in Mg(2+) binding. Residues 140-142 (TID), 186-188 (MGR), Glu-247, and 308-311 (YELR) each bind substrate. Asp-142 (proton acceptor) is an active-site residue.

It belongs to the phosphofructokinase type A (PFKA) family. PPi-dependent PFK group II subfamily. Clade 'Short' sub-subfamily. As to quaternary structure, homotetramer. The cofactor is Mg(2+).

It is found in the cytoplasm. The catalysed reaction is beta-D-fructose 6-phosphate + diphosphate = beta-D-fructose 1,6-bisphosphate + phosphate + H(+). It functions in the pathway carbohydrate degradation; glycolysis; D-glyceraldehyde 3-phosphate and glycerone phosphate from D-glucose: step 3/4. With respect to regulation, non-allosteric. Catalyzes the phosphorylation of D-fructose 6-phosphate, the first committing step of glycolysis. Uses inorganic phosphate (PPi) as phosphoryl donor instead of ATP like common ATP-dependent phosphofructokinases (ATP-PFKs), which renders the reaction reversible, and can thus function both in glycolysis and gluconeogenesis. Consistently, PPi-PFK can replace the enzymes of both the forward (ATP-PFK) and reverse (fructose-bisphosphatase (FBPase)) reactions. The protein is Pyrophosphate--fructose 6-phosphate 1-phosphotransferase 2 (pfk2) of Trichomonas vaginalis (strain ATCC PRA-98 / G3).